The sequence spans 2056 residues: E3 ubiquitin-protein ligase TRIP12 (2056 aa).

Polar residues-rich tracts occupy residues 1–10 (MSSRPNNNPG) and 18–27 (RNTAGAQPQE). Residues 1 to 440 (MSSRPNNNPG…SGESESDDSE (440 aa)) form a disordered region. A compositionally biased stretch (basic and acidic residues) spans 39 to 51 (AENKTHSLPESRK). 2 stretches are compositionally biased toward polar residues: residues 58–67 (KVQSNTTSGP) and 153–168 (SQEQ…STSK). Composition is skewed to low complexity over residues 213 to 226 (LSKL…SAKA) and 234 to 253 (SSSS…VSAA). 2 stretches are compositionally biased toward polar residues: residues 317–327 (PGSSKTETSKP) and 363–375 (QKTT…TSRR). Residues 383-395 (AAAEARRQEKMAD) are compositionally biased toward basic and acidic residues. Residues 415–433 (GAAASSSVAGAVGMTTSGE) are compositionally biased toward low complexity. The region spanning 791-905 (MLKKGNAQNT…DPELAKSFIK (115 aa)) is the WWE domain. A compositionally biased stretch (low complexity) spans 1027–1042 (TTISTGSGTASGNSAA). 3 disordered regions span residues 1027–1147 (TTIS…ASKD), 1465–1500 (EEEE…DELW), and 1632–1651 (TNPE…PRLD). Basic residues predominate over residues 1069-1082 (KRKRLPKRGPRRPK). Basic and acidic residues predominate over residues 1085–1094 (PPRDEDKVDN). 2 stretches are compositionally biased toward polar residues: residues 1095–1106 (QAKSPTTTQSPK) and 1119–1129 (RLSTQSNSNNI). The interval 1560–1634 (EIIPTSEFNN…AMQRLLDTNP (75 aa)) is K-box. Positions 1949–2056 (PDHGYTHDSR…REGQQSFHLS (108 aa)) constitute an HECT domain. Cys-2023 (glycyl thioester intermediate) is an active-site residue.

The protein belongs to the UPL family. K-HECT subfamily.

It is found in the nucleus. The protein resides in the nucleoplasm. The catalysed reaction is S-ubiquitinyl-[E2 ubiquitin-conjugating enzyme]-L-cysteine + [acceptor protein]-L-lysine = [E2 ubiquitin-conjugating enzyme]-L-cysteine + N(6)-ubiquitinyl-[acceptor protein]-L-lysine.. It functions in the pathway protein modification; protein ubiquitination. Its function is as follows. E3 ubiquitin-protein ligase involved in ubiquitin fusion degradation (UFD) pathway and regulation of DNA repair. Part of the ubiquitin fusion degradation (UFD) pathway, a process that mediates ubiquitination of protein at their N-terminus, regardless of the presence of lysine residues in target proteins. Acts as a key regulator of DNA damage response by acting as a suppressor of RNF168, an E3 ubiquitin-protein ligase that promotes accumulation of 'Lys-63'-linked histone H2A and H2AX at DNA damage sites, thereby acting as a guard against excessive spreading of ubiquitinated chromatin at damaged chromosomes. The chain is E3 ubiquitin-protein ligase TRIP12 (trip12) from Xenopus tropicalis (Western clawed frog).